We begin with the raw amino-acid sequence, 344 residues long: DNA polymerase IV (344 aa).

Positions 2–183 (IMLIDFDYFF…IKINDIPGIG (182 aa)) constitute a UmuC domain. 2 residues coordinate Mg(2+): Asp6 and Asp105. Glu106 is a catalytic residue.

Belongs to the DNA polymerase type-Y family. As to quaternary structure, monomer. Mg(2+) serves as cofactor.

It is found in the cytoplasm. It carries out the reaction DNA(n) + a 2'-deoxyribonucleoside 5'-triphosphate = DNA(n+1) + diphosphate. Poorly processive, error-prone DNA polymerase involved in untargeted mutagenesis. Copies undamaged DNA at stalled replication forks, which arise in vivo from mismatched or misaligned primer ends. These misaligned primers can be extended by PolIV. Exhibits no 3'-5' exonuclease (proofreading) activity. May be involved in translesional synthesis. This Picrophilus torridus (strain ATCC 700027 / DSM 9790 / JCM 10055 / NBRC 100828 / KAW 2/3) protein is DNA polymerase IV.